We begin with the raw amino-acid sequence, 167 residues long: Protein-export protein SecB (167 aa).

Belongs to the SecB family. As to quaternary structure, homotetramer, a dimer of dimers. One homotetramer interacts with 1 SecA dimer.

The protein resides in the cytoplasm. Its function is as follows. One of the proteins required for the normal export of preproteins out of the cell cytoplasm. It is a molecular chaperone that binds to a subset of precursor proteins, maintaining them in a translocation-competent state. It also specifically binds to its receptor SecA. This chain is Protein-export protein SecB, found in Cellvibrio japonicus (strain Ueda107) (Pseudomonas fluorescens subsp. cellulosa).